We begin with the raw amino-acid sequence, 186 residues long: uncharacterized protein (186 aa).

One can recognise a Cupin type-2 domain in the interval 89–164; that stretch reads LMSLGIGEDI…NTPLKLYSIY (76 aa). An ATP-binding site is contributed by 117-124; it reads GIVKMGKS.

This is an uncharacterized protein from Bacillus subtilis (strain 168).